A 222-amino-acid chain; its full sequence is 2-hydroxypent-2,4-dienoate hydratase (222 aa).

The protein belongs to the hydratase/decarboxylase family.

Its pathway is aromatic compound metabolism; benzoate degradation via hydroxylation. Its function is as follows. Conversion of 2-hydroxypent-2,4-dienoate into 4-hydroxy-2-oxopentanoate. The chain is 2-hydroxypent-2,4-dienoate hydratase (xylJ) from Pseudomonas putida (Arthrobacter siderocapsulatus).